A 400-amino-acid polypeptide reads, in one-letter code: Phosphoglycerate kinase (400 aa).

Substrate is bound by residues 23–25, R38, 61–64, R120, and R153; these read DLN and HFGR. Residues K203, E325, and 355 to 358 contribute to the ATP site; that span reads GGDT.

This sequence belongs to the phosphoglycerate kinase family. In terms of assembly, monomer.

It localises to the cytoplasm. It carries out the reaction (2R)-3-phosphoglycerate + ATP = (2R)-3-phospho-glyceroyl phosphate + ADP. The protein operates within carbohydrate degradation; glycolysis; pyruvate from D-glyceraldehyde 3-phosphate: step 2/5. This is Phosphoglycerate kinase from Allorhizobium ampelinum (strain ATCC BAA-846 / DSM 112012 / S4) (Agrobacterium vitis (strain S4)).